The following is an 843-amino-acid chain: Aconitase AMT8-2 (843 aa).

Position 258–260 (258–260 (DSH)) interacts with substrate. The [4Fe-4S] cluster site is built by C450, C513, and C516. Residues R536, R541, and 712–713 (SR) contribute to the substrate site.

The protein belongs to the aconitase/IPM isomerase family.

Its pathway is mycotoxin biosynthesis. In terms of biological role, aconitase; part of the gene clusters that mediate the biosynthesis of AM-toxins, host-selective toxins (HSTs) causing Alternaria blotch on apple, a worldwide distributed disease. AM-toxins are cyclic depsipeptides containing the 3 residues 2-hydroxy-isovaleric acid (2-HIV), dehydroalanine, L-alanine which are common for all 3 AM-toxins I to III. The fourth precursor is L-alpha-amino-methoxyphenyl-valeric acid (L-Amv) for AM-toxin I, L-alpha-amino-phenyl-valeric acid (L-Apv) for AM-toxin II, and L-alpha-amino-hydroxyphenyl-valeric acid (L-Ahv) for AM-toxin III. AM-toxins have two target sites for affecting susceptible apple cells; they cause invagination of the plasma membrane and electrolyte loss and chloroplast disorganization. The non-ribosomal peptide synthetase AMT1 contains 4 catalytic modules and is responsible for activation of each residue in AM-toxin. The aldo-keto reductase AMT2 catalyzes the conversion of 2-keto-isovaleric acid (2-KIV) to 2-hydroxy-isovaleric acid (2-HIV), one of the precursor residues incorporated by AMT1 during AM-toxin biosynthesis, by reduction of its ketone to an alcohol. The cytochrome P450 monooxygenase AMT3 and the thioesterase AMT4 are also important for AM-toxin production, but their exact function within the AM-toxin biosynthesis are not known yet. Up to 21 proteins (including AMT1 to AMT4) are predicted to be involved in AM-toxin biosynthesis since their expression ishighly up-regulated in AM-toxin-producing cultures. The protein is Aconitase AMT8-2 of Alternaria alternata (Alternaria rot fungus).